The sequence spans 92 residues: DNA-binding protein HU (92 aa).

Positions 58-92 (AGTARNPRTGETVNRPASKTARFQVGEGLKSSLNS) are disordered.

This sequence belongs to the bacterial histone-like protein family. In terms of assembly, homodimer.

In terms of biological role, histone-like DNA-binding protein which is capable of wrapping DNA to stabilize it, and thus to prevent its denaturation under extreme environmental conditions. This chain is DNA-binding protein HU (hup), found in Caulobacter vibrioides (strain ATCC 19089 / CIP 103742 / CB 15) (Caulobacter crescentus).